The following is a 423-amino-acid chain: UDP-N-acetylglucosamine 1-carboxyvinyltransferase (423 aa).

22-23 is a binding site for phosphoenolpyruvate; sequence KN. Residue Arg-93 coordinates UDP-N-acetyl-alpha-D-glucosamine. The Proton donor role is filled by Cys-117. At Cys-117 the chain carries 2-(S-cysteinyl)pyruvic acid O-phosphothioketal. UDP-N-acetyl-alpha-D-glucosamine is bound by residues 122–126, Asp-308, and Val-330; that span reads RPVDL.

This sequence belongs to the EPSP synthase family. MurA subfamily.

The protein localises to the cytoplasm. The enzyme catalyses phosphoenolpyruvate + UDP-N-acetyl-alpha-D-glucosamine = UDP-N-acetyl-3-O-(1-carboxyvinyl)-alpha-D-glucosamine + phosphate. The protein operates within cell wall biogenesis; peptidoglycan biosynthesis. Its function is as follows. Cell wall formation. Adds enolpyruvyl to UDP-N-acetylglucosamine. This chain is UDP-N-acetylglucosamine 1-carboxyvinyltransferase, found in Finegoldia magna (strain ATCC 29328 / DSM 20472 / WAL 2508) (Peptostreptococcus magnus).